The sequence spans 331 residues: Isopenicillin N synthase (331 aa).

Residues R87, Y91, S183, and Y189 each coordinate isopenicillin N. The N-[(5S)-5-amino-5-carboxypentanoyl]-L-cysteinyl-D-valine site is built by R87, Y91, S183, Y189, H214, and D216. A Fe2OG dioxygenase domain is found at 181–288; that stretch reads LSSVVLIRYP…RQSLPFFVNL (108 aa). 3 residues coordinate Fe(2+): H214, D216, and H270. 2-oxoglutarate is bound at residue R279. S281 contacts isopenicillin N. Residue S281 coordinates N-[(5S)-5-amino-5-carboxypentanoyl]-L-cysteinyl-D-valine.

Belongs to the iron/ascorbate-dependent oxidoreductase family. It depends on Fe(2+) as a cofactor.

The protein localises to the cytoplasm. Its subcellular location is the cytosol. The enzyme catalyses N-[(5S)-5-amino-5-carboxypentanoyl]-L-cysteinyl-D-valine + O2 = isopenicillin N + 2 H2O. It participates in antibiotic biosynthesis; penicillin G biosynthesis; penicillin G from L-alpha-aminoadipate and L-cysteine and L-valine: step 2/3. Isopenicillin N synthase; part of the gene cluster that mediates the biosynthesis of penicillin, the world's most important antibiotic. The first step of the pathway is performed by the trimodular NRPS acvA that produces the tripeptide N-[(5S)-5-amino-5-carboxypentanoyl]-L-cysteinyl-D-valine (LLD-ACV or ACV) via condensation of the 3 residues L-2-aminoadipate, L-cysteine and L-valine. The precursor amino acids for penicillin biosynthesis are withdrawn from the vacuolar amino acid pool by the MFS-type transporter penV. Each of the constituent amino acids of the tripeptide acv are activated as aminoacyl-adenylates with peptide bonds formed through the participation of amino acid thioester intermediates. The tripeptide ACV is then cyclized to form isopenicillin N (IPN) by the isopenicillin N synthase ipnA that forms the beta-lactam nucleus. Finally, the alpha-aminoadipyl side chain is exchanged for phenylacetic acid by the isopenicillin N acyltransferase aatA to yield penicillin. This step occurs in the peroxisomal matrix and the penM and paaT transporters are involved in the isopenicillin N and phenylacetic acid import into the peroxisome, respectively. The chain is Isopenicillin N synthase from Penicillium rubens (strain ATCC 28089 / DSM 1075 / NRRL 1951 / Wisconsin 54-1255) (Penicillium chrysogenum).